A 139-amino-acid polypeptide reads, in one-letter code: Holo-[acyl-carrier-protein] synthase (139 aa).

Residues aspartate 8 and glutamate 57 each contribute to the Mg(2+) site.

The protein belongs to the P-Pant transferase superfamily. AcpS family. Mg(2+) is required as a cofactor.

Its subcellular location is the cytoplasm. The enzyme catalyses apo-[ACP] + CoA = holo-[ACP] + adenosine 3',5'-bisphosphate + H(+). In terms of biological role, transfers the 4'-phosphopantetheine moiety from coenzyme A to a Ser of acyl-carrier-protein. This chain is Holo-[acyl-carrier-protein] synthase, found in Sinorhizobium medicae (strain WSM419) (Ensifer medicae).